The chain runs to 462 residues: Tubulin gamma-1 chain (462 aa).

142 to 148 lines the GTP pocket; sequence AGGTGSG.

The protein belongs to the tubulin family.

The protein resides in the cytoplasm. It localises to the cytoskeleton. The protein localises to the microtubule organizing center. Its subcellular location is the centrosome. Its function is as follows. Tubulin is the major constituent of microtubules. The gamma chain is found at microtubule organizing centers (MTOC) such as the spindle poles or the centrosome, suggesting that it is involved in the minus-end nucleation of microtubule assembly. This chain is Tubulin gamma-1 chain, found in Euplotes crassus.